Consider the following 605-residue polypeptide: uncharacterized protein (605 aa).

Disordered regions lie at residues Arg-10 to Ala-78 and Arg-216 to Pro-248. Over residues Ala-20 to Gly-48 the composition is skewed to low complexity. Pro residues predominate over residues Cys-220–Arg-233.

This is an uncharacterized protein from Dryophytes versicolor (chameleon treefrog).